The following is a 118-amino-acid chain: Large ribosomal subunit protein bL20 (118 aa).

This sequence belongs to the bacterial ribosomal protein bL20 family.

In terms of biological role, binds directly to 23S ribosomal RNA and is necessary for the in vitro assembly process of the 50S ribosomal subunit. It is not involved in the protein synthesizing functions of that subunit. This Staphylococcus haemolyticus (strain JCSC1435) protein is Large ribosomal subunit protein bL20.